Reading from the N-terminus, the 390-residue chain is Magnesium-protoporphyrin IX monomethyl ester [oxidative] cyclase (390 aa).

A disordered region spans residues 1-20 (MSQSTIESTNKKEINKGKAP).

Belongs to the AcsF family. Fe cation serves as cofactor.

The catalysed reaction is Mg-protoporphyrin IX 13-monomethyl ester + 3 NADPH + 3 O2 + 2 H(+) = 3,8-divinyl protochlorophyllide a + 3 NADP(+) + 5 H2O. It participates in porphyrin-containing compound metabolism; chlorophyll biosynthesis (light-independent). Functionally, catalyzes the formation of the isocyclic ring in chlorophyll biosynthesis. Mediates the cyclase reaction, which results in the formation of divinylprotochlorophyllide (Pchlide) characteristic of all chlorophylls from magnesium-protoporphyrin IX 13-monomethyl ester (MgPMME). The sequence is that of Magnesium-protoporphyrin IX monomethyl ester [oxidative] cyclase from Prochlorococcus marinus (strain MIT 9301).